We begin with the raw amino-acid sequence, 389 residues long: Na(+)/H(+) antiporter NhaA (389 aa).

11 helical membrane passes run 14-34 (AGGI…NSPL), 59-79 (LILW…GLEV), 95-115 (SLPT…YLLF), 124-144 (AGWA…MALL), 154-174 (VFLL…IALF), 177-197 (TDLS…LVGL), 213-233 (LILW…GVII), 257-277 (PWST…VYVG), 292-312 (IALG…YIAV), 328-348 (IAPV…IASL), and 363-383 (LGTL…LSKV).

The protein belongs to the NhaA Na(+)/H(+) (TC 2.A.33) antiporter family.

Its subcellular location is the cell inner membrane. The enzyme catalyses Na(+)(in) + 2 H(+)(out) = Na(+)(out) + 2 H(+)(in). In terms of biological role, na(+)/H(+) antiporter that extrudes sodium in exchange for external protons. This is Na(+)/H(+) antiporter NhaA from Shewanella baltica (strain OS223).